Consider the following 185-residue polypeptide: Probable chorismate pyruvate-lyase 1 (185 aa).

Positions 70, 108, and 166 each coordinate substrate.

It belongs to the UbiC family.

The protein resides in the cytoplasm. It catalyses the reaction chorismate = 4-hydroxybenzoate + pyruvate. The protein operates within cofactor biosynthesis; ubiquinone biosynthesis. Its function is as follows. Removes the pyruvyl group from chorismate, with concomitant aromatization of the ring, to provide 4-hydroxybenzoate (4HB) for the ubiquinone pathway. The protein is Probable chorismate pyruvate-lyase 1 of Pseudomonas fluorescens (strain Pf0-1).